A 120-amino-acid polypeptide reads, in one-letter code: NAD(P)H-quinone oxidoreductase subunit 3 (120 aa).

3 consecutive transmembrane segments (helical) span residues Tyr-7–Ala-27, Met-64–Val-84, and Leu-89–Val-109.

The protein belongs to the complex I subunit 3 family. NDH-1 can be composed of about 15 different subunits; different subcomplexes with different compositions have been identified which probably have different functions.

Its subcellular location is the cellular thylakoid membrane. The catalysed reaction is a plastoquinone + NADH + (n+1) H(+)(in) = a plastoquinol + NAD(+) + n H(+)(out). The enzyme catalyses a plastoquinone + NADPH + (n+1) H(+)(in) = a plastoquinol + NADP(+) + n H(+)(out). Functionally, NDH-1 shuttles electrons from an unknown electron donor, via FMN and iron-sulfur (Fe-S) centers, to quinones in the respiratory and/or the photosynthetic chain. The immediate electron acceptor for the enzyme in this species is believed to be plastoquinone. Couples the redox reaction to proton translocation, and thus conserves the redox energy in a proton gradient. Cyanobacterial NDH-1 also plays a role in inorganic carbon-concentration. This chain is NAD(P)H-quinone oxidoreductase subunit 3, found in Microcystis aeruginosa (strain NIES-843 / IAM M-2473).